We begin with the raw amino-acid sequence, 143 residues long: Sirohydrochlorin cobaltochelatase (143 aa).

The active-site Proton acceptor is H18. Residue H18 participates in Co(2+) binding. Ni(2+) is bound at residue H18. Substrate contacts are provided by residues R53 and L78 to H83. Position 83 (H83) interacts with Co(2+). H83 contributes to the Ni(2+) binding site.

It belongs to the CbiX family. CbiXS subfamily. As to quaternary structure, homotetramer; dimer of dimers.

It catalyses the reaction Co-sirohydrochlorin + 2 H(+) = sirohydrochlorin + Co(2+). It carries out the reaction Ni-sirohydrochlorin + 2 H(+) = sirohydrochlorin + Ni(2+). The protein operates within cofactor biosynthesis; adenosylcobalamin biosynthesis; cob(II)yrinate a,c-diamide from sirohydrochlorin (anaerobic route): step 1/10. In terms of biological role, catalyzes the insertion of Co(2+) into sirohydrochlorin as part of the anaerobic pathway to cobalamin biosynthesis. Involved in the biosynthesis of the unique nickel-containing tetrapyrrole coenzyme F430, the prosthetic group of methyl-coenzyme M reductase (MCR), which plays a key role in methanogenesis and anaerobic methane oxidation (Potential). Catalyzes the insertion of Ni(2+) into sirohydrochlorin to yield Ni-sirohydrochlorin (Potential). The sequence is that of Sirohydrochlorin cobaltochelatase from Methanothermobacter thermautotrophicus (strain ATCC 29096 / DSM 1053 / JCM 10044 / NBRC 100330 / Delta H) (Methanobacterium thermoautotrophicum).